A 397-amino-acid polypeptide reads, in one-letter code: Izumo sperm-egg fusion protein 1 (397 aa).

The N-terminal stretch at 1–21 (MGPHFTLLLAALANCLCPGRP) is a signal peptide. Intrachain disulfides connect cysteine 22–cysteine 149, cysteine 25–cysteine 152, cysteine 135–cysteine 159, cysteine 139–cysteine 165, and cysteine 182–cysteine 233. Over 22-319 (CIKCDQFVTD…QNPEKKMKTR (298 aa)) the chain is Extracellular. Positions 148–160 (WCLKCEKQLHICR) are important for interaction with IZUMO1R. In terms of domain architecture, Ig-like C2-type spans 167–251 (ERHIEVHRSE…HATVIRYDVT (85 aa)). Asparagine 204 is a glycosylation site (N-linked (GlcNAc...) asparagine). Residues 271 to 292 (EHETPVHVTPQTPPGQEPESEL) are disordered. Residues 320 to 340 (LLILLTLGFVVLVASIIISVL) traverse the membrane as a helical segment. Residues 341 to 397 (HFRKVSAKLKNASDEVKPTASGSKSDQSLSQQMGLKKASQADFNSDYSGDKSEATEN) lie on the Cytoplasmic side of the membrane. The tract at residues 351–397 (NASDEVKPTASGSKSDQSLSQQMGLKKASQADFNSDYSGDKSEATEN) is disordered. Residues 360–373 (ASGSKSDQSLSQQM) show a composition bias toward polar residues. Phosphoserine is present on serine 379. Basic and acidic residues predominate over residues 388–397 (SGDKSEATEN).

It belongs to the Izumo family. Monomer, homodimer; disulfide-linked and homooligomer; depending on the context. Interacts with IZUMO1R/JUNO. IZUMO1 and IZUMO1R/JUNO form a complex with 1:1 stoichiometry. In gamete recognition, IZUMO1R/JUNO first binds to monomeric IZUMO1. The weak, but specific interaction with IZUMO1R/JUNO induces IZUMO1 homodimerization. The process follows a tight binding phase where IZUMO1 bends the entire structure towards the sperm membrane side through a thiol-disulfide exchange reaction. The molecule no longer binds to IZUMO1R/JUNO and instead binds to a putative second oocyte receptor. Interacts with ACE3. Part of a oolemmal binding multimeric complex (IZUMO1 complex) composed at least of IZUMO1 and GLIPR1L1; the complex assemblage is influenced by the maturation status of the male germ cell. Interacts with GLIPR1L1. Interacts with FREY; the interaction retains IZUMO1 at the endoplasmic reticulum membrane and coordinates IZUMO1 complex assembly. Interacts with WDR54. Forms a complex with SPACA6 and TMEM81 on spermatocyte cell membrane. N-glycosylated. Glycosylation is not essential for fusion and for proper protein trafficking in sperm. Post-translationally, phosphorylated. The cytoplasmic C-terminus is phosphorylated and undergoes phosphorylation changes during epididymal transit. As to expression, sperm-specific (at protein level). Detectable on sperm surface only after the acrosome reaction. Expressed in spermatozoa, more abundantly expressed in the head than the tail (at protein level).

It is found in the cell membrane. The protein localises to the cytoplasmic vesicle. It localises to the secretory vesicle. Its subcellular location is the acrosome membrane. In terms of biological role, essential sperm cell-surface protein required for fertilization by acting as a ligand for IZUMO1R/JUNO receptor on egg. The IZUMO1:IZUMO1R/JUNO interaction is a necessary adhesion event between sperm and egg that is required for fertilization but is not sufficient for cell fusion. The ligand-receptor interaction probably does not act as a membrane 'fusogen'. Plays a critical role in sperm-oolemma binding prior to plasma membrane fusion. Can mediate cell-cell fusion in cultured mammalian cells independently of its binding to IZUMO1R/JUNO. The polypeptide is Izumo sperm-egg fusion protein 1 (Mus musculus (Mouse)).